Reading from the N-terminus, the 603-residue chain is Geraniol synthase Tps-5031G8, chloroplastic (603 aa).

Residues 1–35 constitute a chloroplast transit peptide; that stretch reads MCSISQKVVIGLNKAAANNCLQNLDRRGFKTRRVS. Residues R319, D356, D360, R497, and D500 each contribute to the (2E)-geranyl diphosphate site. Residues D356 and D360 each coordinate Mg(2+). The DDXXD motif motif lies at 356–360; it reads DDVYD. Positions 500, 504, and 508 each coordinate Mg(2+).

The protein belongs to the terpene synthase family. Tpsb subfamily. In terms of assembly, monomer. It depends on Mg(2+) as a cofactor. The cofactor is Mn(2+).

The protein localises to the plastid. It is found in the chloroplast. The enzyme catalyses (2E)-geranyl diphosphate + H2O = (2E)-geraniol + diphosphate. It functions in the pathway secondary metabolite biosynthesis; terpenoid biosynthesis. Monoterpene synthase (mono-TPS) involved in the biosynthesis of monoterpenes natural products. Catalyzes the conversion of (2E)-geranyl diphosphate (GPP) into geraniol. This chain is Geraniol synthase Tps-5031G8, chloroplastic, found in Perilla frutescens var. hirtella (Perilla citriodora).